Reading from the N-terminus, the 404-residue chain is Ubiquitin-like modifier-activating enzyme 5 (404 aa).

ATP-binding residues include Gly-83, Asp-104, Lys-127, Asn-150, and Asn-184. Zn(2+) is bound by residues Cys-226 and Cys-229. Cys-250 acts as the Glycyl thioester intermediate in catalysis. Residues Cys-303 and Cys-308 each coordinate Zn(2+). The tract at residues 372–393 (APEKSSETSEETVTAATADETS) is disordered. A compositionally biased stretch (low complexity) spans 382 to 391 (ETVTAATADE).

It belongs to the ubiquitin-activating E1 family. UBA5 subfamily.

In terms of biological role, E1-like enzyme which activates UFM1. This Drosophila sechellia (Fruit fly) protein is Ubiquitin-like modifier-activating enzyme 5.